The following is a 335-amino-acid chain: GTPase Obg (335 aa).

Residues 4–162 (GNFVDYTKIY…ADIVLELKVL (159 aa)) form the Obg domain. In terms of domain architecture, OBG-type G spans 163-332 (ADVGLVGFPN…LKDKLWAMLN (170 aa)). Residues 169–176 (GFPNAGKS), 194–198 (FTTLK), 216–219 (DIPG), 283–286 (SKCD), and 313–315 (SSI) contribute to the GTP site. Residues Ser176 and Thr196 each contribute to the Mg(2+) site.

Belongs to the TRAFAC class OBG-HflX-like GTPase superfamily. OBG GTPase family. Monomer. Requires Mg(2+) as cofactor.

The protein localises to the cytoplasm. An essential GTPase which binds GTP, GDP and possibly (p)ppGpp with moderate affinity, with high nucleotide exchange rates and a fairly low GTP hydrolysis rate. Plays a role in control of the cell cycle, stress response, ribosome biogenesis and in those bacteria that undergo differentiation, in morphogenesis control. The protein is GTPase Obg of Flavobacterium psychrophilum (strain ATCC 49511 / DSM 21280 / CIP 103535 / JIP02/86).